The primary structure comprises 601 residues: Glutathione-regulated potassium-efflux system protein KefB (601 aa).

The next 13 helical transmembrane spans lie at 4-24 (ADLL…VPLA), 29-49 (IGAV…GLGF), 55-75 (EILH…GLEL), 87-107 (IFGV…GLLM), 111-131 (FLWQ…TAMA), 152-172 (VLLF…LLAG), 177-197 (HFDW…LIGG), 207-227 (FIAA…LVLS), 230-250 (LFMD…GVLL), 262-282 (AIDP…GMSL), 284-304 (LGVL…LVVI), 324-344 (MQFA…FSTA), and 356-376 (ALLL…MKGI). Residues 400 to 519 (KPQVIVVGFG…AGVTQFSRET (120 aa)) form the RCK N-terminal domain.

Belongs to the monovalent cation:proton antiporter 2 (CPA2) transporter (TC 2.A.37) family. KefB subfamily. In terms of assembly, interacts with the regulatory subunit KefG.

The protein resides in the cell inner membrane. Pore-forming subunit of a potassium efflux system that confers protection against electrophiles. Catalyzes K(+)/H(+) antiport. The protein is Glutathione-regulated potassium-efflux system protein KefB of Salmonella paratyphi B (strain ATCC BAA-1250 / SPB7).